A 271-amino-acid chain; its full sequence is Aquaporin-2 (271 aa).

Topologically, residues Met1–Arg11 are cytoplasmic. A helical membrane pass occupies residues Ala12 to Leu32. At Asn33–Ser40 the chain is on the extracellular side. The helical transmembrane segment at Val41–Leu59 threads the bilayer. Topologically, residues Gly60–Gly64 are cytoplasmic. Residues Ala65–Ala74 constitute an intramembrane region (discontinuously helical). An NPA 1 motif is present at residues Asn68–Ala70. Residues Cys75–Arg85 lie on the Cytoplasmic side of the membrane. A helical membrane pass occupies residues Ala86 to Ile107. The Extracellular segment spans residues Thr108–Ala127. Asn123 carries an N-linked (GlcNAc...) asparagine glycan. The chain crosses the membrane as a helical span at residues Gly128–Ser148. The Cytoplasmic portion of the chain corresponds to Thr149–Asn156. A helical transmembrane segment spans residues Val157 to Ile176. At His177 to Gly180 the chain is on the extracellular side. The discontinuously helical intramembrane region spans Cys181–Ile193. The NPA 2 motif lies at Asn184 to Ala186. Residues Val194–His201 lie on the Extracellular side of the membrane. The chain crosses the membrane as a helical span at residues Trp202–Val222. Over Leu223–Ala271 the chain is Cytoplasmic. Residues Val251–Ala271 form a disordered region. Phosphoserine is present on Ser256. Residues Ser261–Ala271 show a composition bias toward polar residues.

The protein belongs to the MIP/aquaporin (TC 1.A.8) family. Homotetramer. Ser-256 phosphorylation is necessary and sufficient for expression at the apical membrane. Endocytosis is not phosphorylation-dependent. Post-translationally, N-glycosylated.

It is found in the apical cell membrane. Its subcellular location is the basolateral cell membrane. It localises to the cell membrane. The protein resides in the cytoplasmic vesicle membrane. The protein localises to the golgi apparatus. It is found in the trans-Golgi network membrane. The catalysed reaction is H2O(in) = H2O(out). It carries out the reaction glycerol(in) = glycerol(out). Forms a water-specific channel that provides the plasma membranes of renal collecting duct with high permeability to water, thereby permitting water to move in the direction of an osmotic gradient. Could also be permeable to glycerol. This chain is Aquaporin-2, found in Bos taurus (Bovine).